A 623-amino-acid chain; its full sequence is Protein skinhead-1 (623 aa).

Disordered stretches follow at residues 1-29 (MGGS…FSSV), 158-184 (TEHP…YEYS), 421-451 (YQST…GSVT), and 467-557 (QRHS…LASD). Serine 164 is subject to Phosphoserine; by pmk-1. Positions 173–184 (ERPTTSSRYEYS) are enriched in polar residues. Residue serine 430 is modified to Phosphoserine; by pmk-1. Composition is skewed to low complexity over residues 435–449 (GSSG…SPGS), 472–498 (SDCT…ESST), and 511–529 (PSSG…SQSS). The tract at residues 540–623 (SGQRKRGRQS…DRHDKMSHYI (84 aa)) is basic motif.

The protein belongs to the bZIP family. Skn1 subfamily. Monomer. Interacts with GATA factor elt-3; interaction may enhance transcriptional activation of target genes. In terms of assembly, interacts with pgma-5. Interacts with transcription factor mxl-3 (via N-terminus). Cleaved by the aspartic protease ddi-1. As to expression, postembryonic intestinal cells.

It localises to the nucleus. The protein resides in the cytoplasm. The protein localises to the mitochondrion. In terms of biological role, transcription factor. Required to specify the fate of ventral blastomeres in the early embryo, and postembryonically for the development of the intestine. Directly regulates expression of zygotically expressed med-1 and med-2 to direct mesendoderm development. In response to oxidative stress and anoxia, required to up-regulate expression of stl-1 mRNA. Involved in regulating innate immunity, acting downstream of the pmk-1 p38/MAPK pathway and probably also downstream of nipi-3. Required for the up-regulation of phase II detoxification genes, including gcs-1 and several glutathione-S-transferase mRNAs in response to oxidative stress generated during pathogenic bacterial infection. Modulates oxidative stress responses in concert with transcription factors such as hcf-1 and elt-3. Regulates the transcription of genes associated with metabolism in response to changes in nutrient availability. In neurons, involved in mitochondrial fusion and behavioral recovery during reoxygenation. Required for riok-1 mRNA expression in the intestine. Downstream of the let-60/Ras, mek-2 and pmk-1 pathway, positively regulates lifespan probably by preventing transcription of insulin-like peptides such as ins-39. Prevents degeneration of dopaminergic CEP neurons in response to high Al(3+) or Mn(2+) levels, probably by promoting the expression of glutathione-S-transferase gst-1. Its function is as follows. Directed by the ER-associated degradation pathway (ERAD), mediates proteasomal homeostasis by regulating the expression of proteasomal subunits such as rpt-3 to confer resistance to proteasomal dysfunction. This is Protein skinhead-1 (skn-1) from Caenorhabditis elegans.